Here is a 502-residue protein sequence, read N- to C-terminus: Protein DETOXIFICATION 7 (502 aa).

A run of 12 helical transmembrane segments spans residues 36–56 (MAAP…ISMV), 68–88 (AVAI…VGFA), 112–132 (YSSM…WFFM), 143–163 (PLIS…LFGF), 182–202 (LFVS…LLVY), 208–228 (IVGA…LLWI), 262–282 (AMMI…SGLL), 291–311 (VISI…AIGA), 331–351 (AAVN…TITL), 375–395 (ITPI…LSGV), 408–428 (ASLG…CFVM), and 436–456 (WIGI…VTFF).

This sequence belongs to the multi antimicrobial extrusion (MATE) (TC 2.A.66.1) family.

The protein resides in the membrane. The polypeptide is Protein DETOXIFICATION 7 (Arabidopsis thaliana (Mouse-ear cress)).